The sequence spans 349 residues: GDSL esterase/lipase At2g19060 (349 aa).

The signal sequence occupies residues 1-25; it reads MADKMFKALLWAFATAVVMAEAVRG. The Nucleophile role is filled by serine 37. Asparagine 178 carries an N-linked (GlcNAc...) asparagine glycan. Active-site residues include aspartate 317 and histidine 320.

It belongs to the 'GDSL' lipolytic enzyme family.

The protein localises to the secreted. In Arabidopsis thaliana (Mouse-ear cress), this protein is GDSL esterase/lipase At2g19060.